The sequence spans 839 residues: Probable beta-glucosidase I (839 aa).

N-linked (GlcNAc...) asparagine glycosylation occurs at Asn197. The active site involves Asp225. The 161-residue stretch at 395-555 folds into the PA14 domain; it reads DGKKGFSFRV…SQEELIAKAA (161 aa).

This sequence belongs to the glycosyl hydrolase 3 family.

The protein resides in the secreted. It carries out the reaction Hydrolysis of terminal, non-reducing beta-D-glucosyl residues with release of beta-D-glucose.. Its pathway is glycan metabolism; cellulose degradation. Its function is as follows. Beta-glucosidases are one of a number of cellulolytic enzymes involved in the degradation of cellulosic biomass. Catalyzes the last step releasing glucose from the inhibitory cellobiose. The polypeptide is Probable beta-glucosidase I (bglI) (Aspergillus terreus (strain NIH 2624 / FGSC A1156)).